A 173-amino-acid chain; its full sequence is Crossover junction endodeoxyribonuclease RuvC (173 aa).

Residues Asp-8, Glu-67, and Asp-139 contribute to the active site. Residues Asp-8, Glu-67, and Asp-139 each coordinate Mg(2+).

This sequence belongs to the RuvC family. In terms of assembly, homodimer which binds Holliday junction (HJ) DNA. The HJ becomes 2-fold symmetrical on binding to RuvC with unstacked arms; it has a different conformation from HJ DNA in complex with RuvA. In the full resolvosome a probable DNA-RuvA(4)-RuvB(12)-RuvC(2) complex forms which resolves the HJ. Mg(2+) is required as a cofactor.

The protein resides in the cytoplasm. The enzyme catalyses Endonucleolytic cleavage at a junction such as a reciprocal single-stranded crossover between two homologous DNA duplexes (Holliday junction).. Functionally, the RuvA-RuvB-RuvC complex processes Holliday junction (HJ) DNA during genetic recombination and DNA repair. Endonuclease that resolves HJ intermediates. Cleaves cruciform DNA by making single-stranded nicks across the HJ at symmetrical positions within the homologous arms, yielding a 5'-phosphate and a 3'-hydroxyl group; requires a central core of homology in the junction. The consensus cleavage sequence is 5'-(A/T)TT(C/G)-3'. Cleavage occurs on the 3'-side of the TT dinucleotide at the point of strand exchange. HJ branch migration catalyzed by RuvA-RuvB allows RuvC to scan DNA until it finds its consensus sequence, where it cleaves and resolves the cruciform DNA. The protein is Crossover junction endodeoxyribonuclease RuvC of Erwinia tasmaniensis (strain DSM 17950 / CFBP 7177 / CIP 109463 / NCPPB 4357 / Et1/99).